The primary structure comprises 593 residues: NADH-quinone oxidoreductase subunit C/D (593 aa).

Residues 1 to 184 (MTADSVLSIP…DPYSLSAAKQ (184 aa)) are NADH dehydrogenase I subunit C. The interval 208–593 (DFMFLNLGPN…IDFVMADVDR (386 aa)) is NADH dehydrogenase I subunit D.

It in the N-terminal section; belongs to the complex I 30 kDa subunit family. The protein in the C-terminal section; belongs to the complex I 49 kDa subunit family. As to quaternary structure, NDH-1 is composed of 13 different subunits. Subunits NuoB, CD, E, F, and G constitute the peripheral sector of the complex.

Its subcellular location is the cell inner membrane. It carries out the reaction a quinone + NADH + 5 H(+)(in) = a quinol + NAD(+) + 4 H(+)(out). Functionally, NDH-1 shuttles electrons from NADH, via FMN and iron-sulfur (Fe-S) centers, to quinones in the respiratory chain. The immediate electron acceptor for the enzyme in this species is believed to be ubiquinone. Couples the redox reaction to proton translocation (for every two electrons transferred, four hydrogen ions are translocated across the cytoplasmic membrane), and thus conserves the redox energy in a proton gradient. This Azotobacter vinelandii (strain DJ / ATCC BAA-1303) protein is NADH-quinone oxidoreductase subunit C/D.